Here is a 69-residue protein sequence, read N- to C-terminus: MEGISIAKLLVIGALIVLLFGTNKLRSLGGDLGAAIKGFKKAMNDDQPAAKSSAQDEHPAAISETRPKE.

A helical transmembrane segment spans residues 1–21; it reads MEGISIAKLLVIGALIVLLFG. The disordered stretch occupies residues 45-69; sequence DDQPAAKSSAQDEHPAAISETRPKE. Over residues 54 to 69 the composition is skewed to basic and acidic residues; it reads AQDEHPAAISETRPKE.

The protein belongs to the TatA/E family. TatE subfamily.

It is found in the cell inner membrane. In terms of biological role, part of the twin-arginine translocation (Tat) system that transports large folded proteins containing a characteristic twin-arginine motif in their signal peptide across membranes. TatE shares overlapping functions with TatA. This Dickeya chrysanthemi (strain Ech1591) (Dickeya zeae (strain Ech1591)) protein is Probable Sec-independent protein translocase protein TatE.